The chain runs to 348 residues: MSGMKKNIVVQNELVQVKGRVKAITIKKEDFNEFLKLTTLRVFNKSYDVLMPPIDDMKKNTIDLNGLTIVTQNYLSLLLYQSGATSPSTTAQINLSTSSGSPVTLQYSSKINSNSQGLMVLLQIFEANGNLTFQYYFIGFDTTNSSYSATQAELYASAWVNTSNTGNYCASVNPVTMYTNLVRIAYTNISITKSATEYLFMVWLIEFENVPSYAPFAVPIFANALNLAPIAESTACGSPPPSSVTIYFYNGNCNFTCGGNCPNGGLSSFVEYIQNNALTVEFPLQAPIQGGASNPEVFICTTLNFTYTNSTSVITQISGNESTTVTPPVSGATFYVAIVTISITYTVS.

This is an uncharacterized protein from Sulfolobus islandicus filamentous virus (isolate Iceland/Hveragerdi) (SIFV).